A 310-amino-acid chain; its full sequence is Porphobilinogen deaminase (310 aa).

Cys242 carries the post-translational modification S-(dipyrrolylmethanemethyl)cysteine.

Belongs to the HMBS family. In terms of assembly, monomer. Dipyrromethane serves as cofactor.

It catalyses the reaction 4 porphobilinogen + H2O = hydroxymethylbilane + 4 NH4(+). Its pathway is porphyrin-containing compound metabolism; protoporphyrin-IX biosynthesis; coproporphyrinogen-III from 5-aminolevulinate: step 2/4. Its function is as follows. Tetrapolymerization of the monopyrrole PBG into the hydroxymethylbilane pre-uroporphyrinogen in several discrete steps. This chain is Porphobilinogen deaminase, found in Shewanella baltica (strain OS223).